Consider the following 117-residue polypeptide: Prefoldin subunit beta (117 aa).

This sequence belongs to the prefoldin subunit beta family. Heterohexamer of two alpha and four beta subunits.

It localises to the cytoplasm. Functionally, molecular chaperone capable of stabilizing a range of proteins. Seems to fulfill an ATP-independent, HSP70-like function in archaeal de novo protein folding. The chain is Prefoldin subunit beta from Methanosarcina barkeri (strain Fusaro / DSM 804).